Consider the following 546-residue polypeptide: Tyrosine-protein kinase yes (546 aa).

Over residues 1–18 the composition is skewed to basic and acidic residues; that stretch reads MGCVKSKEDKGPTQKYRP. Residues 1–58 are disordered; the sequence is MGCVKSKEDKGPTQKYRPDPTNPTPGSHMGLYGPDPTQMGQSPALKGPTNNYNSRSSG. Residue G2 is the site of N-myristoyl glycine attachment. The S-palmitoyl cysteine; in membrane form moiety is linked to residue C3. Residues 48 to 58 are compositionally biased toward polar residues; it reads PTNNYNSRSSG. In terms of domain architecture, SH3 spans 94-155; that stretch reads GGVTFFVALY…PSNYVAPADS (62 aa). The SH2 domain occupies 161–258; it reads WYFGKMGRKD…GLCYRLTTVC (98 aa). Residues 280 to 533 enclose the Protein kinase domain; that stretch reads LRLELKLGQG…YIQSFLEDYF (254 aa). Residues 286–294 and K308 contribute to the ATP site; that span reads LGQGCFGEV. D399 serves as the catalytic Proton acceptor. Y429 bears the Phosphotyrosine; by autocatalysis mark. Y540 carries the post-translational modification Phosphotyrosine; by CSK.

Belongs to the protein kinase superfamily. Tyr protein kinase family. SRC subfamily. In terms of processing, autophosphorylation at Tyr-429 maintains enzyme activity. Palmitoylation at Cys-3 promotes membrane localization. Widely expressed.

It localises to the cell membrane. The protein localises to the cytoplasm. The protein resides in the cytoskeleton. Its subcellular location is the microtubule organizing center. It is found in the centrosome. It localises to the cytosol. The protein localises to the cell junction. It carries out the reaction L-tyrosyl-[protein] + ATP = O-phospho-L-tyrosyl-[protein] + ADP + H(+). In terms of biological role, non-receptor protein tyrosine kinase that is involved in the regulation of cell growth and survival, apoptosis, cell-cell adhesion, cytoskeleton remodeling, differentiation, G2/M progression and cytokinesis. Required for convergent extension cell movements during gastrulation, acting with fyna via rhoa. May be required for epiboly to occur, possibly through its effects in calcium signaling. During embryonic development, phosphorylates ptk2.1/fak. This Danio rerio (Zebrafish) protein is Tyrosine-protein kinase yes (yes1).